A 643-amino-acid polypeptide reads, in one-letter code: E3 ubiquitin-protein ligase AMFR (643 aa).

Positions 39–67 (PEAGPGEPDQLTASLQPEPPAPARPSAGG) are disordered. The next 6 helical transmembrane spans lie at 82 to 102 (LFVW…AKLI), 122 to 142 (FWNF…VQTV), 145 to 165 (VVMW…VQLC), 186 to 206 (VLSL…VCSI), 215 to 235 (TLAF…HVIL), and 276 to 296 (HIHM…VIFM). Residues 341–379 (CAICWDSMQAARKLPCGHLFHNSCLRSWLEQDTSCPTCR) form an RING-type zinc finger. A helical membrane pass occupies residues 429-449 (IASWLPSFSVEVMHTTNILGI). Positions 456-498 (QLNAMAHQIQEMFPQVPYHLVLQDLQLTRSVEITTDNILEGRI) constitute a CUE domain. Disordered regions lie at residues 504–579 (TQRS…DERQ) and 596–624 (RFLN…PVTL). Serine 516, serine 523, and serine 542 each carry phosphoserine. Residues 548–563 (TLDFGEVEVEPSEVED) are compositionally biased toward acidic residues. Residues 564–579 (FEARGSRFSKSADERQ) show a composition bias toward basic and acidic residues. The tract at residues 622–640 (VTLRRRMLAAAAERRLQKQ) is VCP/p97-interacting motif (VIM).

As to quaternary structure, interacts with RNF5. Also forms an ERAD complex containing VCP/p97, NGLY1; PSMC1; SAKS1 and RAD23B required for coupling retrotranslocation, ubiquitination and deglycosylation. Interacts with DERL1. Interacts (through a region distinct from the RING finger) with UBE2G2/UBC7. Component of the VCP/p97-AMFR/gp78 complex that enhances VCP/p97 binding to polyubiquitinated proteins for their degradation by the endoplasmic reticulum-associated degradation (ERAD) pathway. Interacts (via the VIM) with VCP/p97. Interacts (via its membrane domain) with INSIG1; the interaction initiates the sterol-mediated ubiquitination and degradation of HMGCR by the ERAD pathway. Interacts with AUP1, UBE2G2 and RNF139/TRC8; interaction with AUP1 facilitates interaction of AMFR with ubiquitin-conjugating enzyme UBE2G2 and ubiquitin ligase RNF139, leading to sterol-induced ubiquitination of HMGCR and its subsequent proteasomal degradation. Interacts with BAG6. Interacts with USP13 (via UBA 2 domain); the interaction is direct. Interacts with LMBR1L. Interacts with UBAC2 and CTNNB1. Interacts with C18orf32. In terms of assembly, (Microbial infection) Interacts with Staphylococcus aureus HIgB; this interaction regulates AMFR-mediated inflammation by promoting TAB3 ubiquitination to promote TAB3-TAK1 complex formation. In terms of processing, palmitoylation of the RING-type zing finger by ZDHHC6 promotes localization to the peripheral endoplasmic reticulum. In terms of tissue distribution, widely expressed.

The protein localises to the endoplasmic reticulum membrane. The enzyme catalyses [E2 ubiquitin-conjugating enzyme]-S-ubiquitinyl-L-cysteine + [acceptor protein]-L-cysteine = [E2 ubiquitin-conjugating enzyme]-L-cysteine + [acceptor protein]-S-ubiquitinyl-L-cysteine.. It functions in the pathway protein modification; protein ubiquitination. Its function is as follows. E3 ubiquitin-protein ligase that mediates the polyubiquitination of lysine and cysteine residues on target proteins, such as CD3D, CYP3A4, CFTR, INSIG1, SOAT2/ACAT2 and APOB for proteasomal degradation. Component of a VCP/p97-AMFR/gp78 complex that participates in the final step of endoplasmic reticulum-associated degradation (ERAD). The VCP/p97-AMFR/gp78 complex is involved in the sterol-accelerated ERAD degradation of HMGCR through binding to the HMGCR-INSIG1 complex at the ER membrane. In addition, interaction of AMFR with AUP1 facilitates interaction of AMFR with ubiquitin-conjugating enzyme UBE2G2 and ubiquitin ligase RNF139, leading to sterol-induced HMGCR ubiquitination. The ubiquitinated HMGCR is then released from the ER into the cytosol for subsequent destruction. In addition to ubiquitination on lysine residues, catalyzes ubiquitination on cysteine residues: together with INSIG1, mediates polyubiquitination of SOAT2/ACAT2 at 'Cys-277', leading to its degradation when the lipid levels are low. Catalyzes ubiquitination and subsequent degradation of INSIG1 when cells are depleted of sterols. Mediates polyubiquitination of INSIG2 at 'Cys-215' in some tissues, leading to its degradation. Also regulates ERAD through the ubiquitination of UBL4A a component of the BAG6/BAT3 complex. Also acts as a scaffold protein to assemble a complex that couples ubiquitination, retranslocation and deglycosylation. Mediates tumor invasion and metastasis as a receptor for the GPI/autocrine motility factor. In association with LMBR1L and UBAC2, negatively regulates the canonical Wnt signaling pathway in the lymphocytes by promoting the ubiquitin-mediated degradation of CTNNB1 and Wnt receptors FZD6 and LRP6. Regulates NF-kappa-B and MAPK signaling pathways by mediating 'Lys-27'-linked polyubiquitination of TAB3 and promoting subsequent TAK1/MAP3K7 activation. Required for proper lipid homeostasis. In Homo sapiens (Human), this protein is E3 ubiquitin-protein ligase AMFR.